The chain runs to 124 residues: Small ribosomal subunit protein uS12 (124 aa).

The tract at residues 1 to 22 (MATINQLVRKPRKRKVAKSDVP) is disordered. Asp89 carries the 3-methylthioaspartic acid modification. A disordered region spans residues 101 to 124 (TLDTQGVQNRKQGRSKYGAKRPKS). Positions 111–124 (KQGRSKYGAKRPKS) are enriched in basic residues.

Belongs to the universal ribosomal protein uS12 family. As to quaternary structure, part of the 30S ribosomal subunit. Contacts proteins S8 and S17. May interact with IF1 in the 30S initiation complex.

In terms of biological role, with S4 and S5 plays an important role in translational accuracy. Interacts with and stabilizes bases of the 16S rRNA that are involved in tRNA selection in the A site and with the mRNA backbone. Located at the interface of the 30S and 50S subunits, it traverses the body of the 30S subunit contacting proteins on the other side and probably holding the rRNA structure together. The combined cluster of proteins S8, S12 and S17 appears to hold together the shoulder and platform of the 30S subunit. The protein is Small ribosomal subunit protein uS12 of Marinobacter nauticus (strain ATCC 700491 / DSM 11845 / VT8) (Marinobacter aquaeolei).